We begin with the raw amino-acid sequence, 571 residues long: MRTSQFLLATQKETPSDAVVISHQLMLRAGMIRKLASGLYTWLPMGLRVMRKVEAIVREEMDAAGSLEVLMPSTQPAELWQESGRWEEYGPELLRIKDRHGRDFCAGPTHEEVITDLMRNELSSYKQLPINLYQIQTKFRDEIRPRFGLMRGREFIMKDSYSFHADQASLQVTYDRMHDAYCNIFTRLGLKFRPVEADNGSIGGAGSHEFHVLAESGEDDIVFSNGSDYAANIEKAEAVPRETSRAAPSEELRLVDTPDTKTIAALVEKFNLPIEKTIKTLIVHAEEEGKLIALIIRGDHELNEIKAANQPGVASPLVMASDAELRDAIGAGAGSLGPLNLPLPIIIDRSVELMSDFAIGANIDDKHYFGVNWERDLPVPTVADLRNVVAGDPSPDGKGTLEIKRGIEVGHIFQLGNKYSKAMKCEVLGENGKPVTLEMGCYGIGVSRVVAAAIEQNNDENGIIWSDALAPFQIALVPLRYETELVREATDKLYAELTAAGFEVLLDDRDKKTSPGIKFADMELIGIPHRIVVSDRGLAEGNLEYKSRTEGQAQALPVADVLSFLQARIRR.

Belongs to the class-II aminoacyl-tRNA synthetase family. ProS type 1 subfamily. Homodimer.

It is found in the cytoplasm. It carries out the reaction tRNA(Pro) + L-proline + ATP = L-prolyl-tRNA(Pro) + AMP + diphosphate. Catalyzes the attachment of proline to tRNA(Pro) in a two-step reaction: proline is first activated by ATP to form Pro-AMP and then transferred to the acceptor end of tRNA(Pro). As ProRS can inadvertently accommodate and process non-cognate amino acids such as alanine and cysteine, to avoid such errors it has two additional distinct editing activities against alanine. One activity is designated as 'pretransfer' editing and involves the tRNA(Pro)-independent hydrolysis of activated Ala-AMP. The other activity is designated 'posttransfer' editing and involves deacylation of mischarged Ala-tRNA(Pro). The misacylated Cys-tRNA(Pro) is not edited by ProRS. This is Proline--tRNA ligase from Pseudomonas fluorescens (strain Pf0-1).